The sequence spans 292 residues: NAD kinase (292 aa).

D73 (proton acceptor) is an active-site residue. NAD(+)-binding positions include 73 to 74 (DG), 147 to 148 (NE), H158, R175, D177, 188 to 193 (TAYSLS), and Q247.

It belongs to the NAD kinase family. A divalent metal cation serves as cofactor.

The protein resides in the cytoplasm. It catalyses the reaction NAD(+) + ATP = ADP + NADP(+) + H(+). Involved in the regulation of the intracellular balance of NAD and NADP, and is a key enzyme in the biosynthesis of NADP. Catalyzes specifically the phosphorylation on 2'-hydroxyl of the adenosine moiety of NAD to yield NADP. This chain is NAD kinase, found in Salmonella choleraesuis (strain SC-B67).